The following is a 346-amino-acid chain: Partitioning defective 6 homolog alpha (346 aa).

An interaction with PRKCI and PRKCZ region spans residues 1 to 116; that stretch reads MARPQRTPAR…SNSLQRRKKG (116 aa). The PB1 domain maps to 15-95; the sequence is IVEVKSKFDA…PPLRLLVQKR (81 aa). Residues 126–253 form an interaction with PARD3 and CDC42 region; it reads RTRPPLLISL…VTVKPANQRN (128 aa). In terms of domain architecture, Pseudo-CRIB spans 133–150; sequence ISLPQDFRQVSSVIDVDL. The 94-residue stretch at 157–250 folds into the PDZ domain; that stretch reads RVRLHKHGSD…NLIVTVKPAN (94 aa). The interval 257–346 is disordered; that stretch reads RGASGRLTGP…IRGDGSGFSL (90 aa). A phosphoserine mark is found at S278 and S345.

The protein belongs to the PAR6 family. In terms of assembly, interacts with MAP2K5. Interacts with PARD3. Interacts with GTP-bound forms of CDC42, RHOQ/TC10 and RAC1. Interacts with the N-terminal part of PRKCI and PRKCZ. Part of a complex with PARD3, CDC42 or RAC1 and PRKCI or PRKCZ. Part of a complex with LLGL1 and PRKCI. Interacts with human T-cell leukemia virus type I TAX protein. Interacts with PALS1 and CRB3. Interacts with TGFBR1; involved in TGF-beta induced epithelial to mesenchymal transition. Interacts with ECT2 ('Thr-359' phosphorylated form) and PRKCI. Interacts with DCTN1 and PCM1. In terms of processing, phosphorylated by the TGF-beta receptor. Ubiquitinated by the SCF(FBXO31) complex, leading to its proteasomal degradation. As to expression, expressed in pancreas, skeletal muscle, brain and heart. Weakly expressed in kidney and placenta.

The protein localises to the cytoplasm. It is found in the cell membrane. The protein resides in the cell projection. It localises to the ruffle. Its subcellular location is the cell junction. The protein localises to the tight junction. It is found in the cytoskeleton. The protein resides in the microtubule organizing center. It localises to the centrosome. Its subcellular location is the centriolar satellite. In terms of biological role, adapter protein involved in asymmetrical cell division and cell polarization processes. Probably involved in the formation of epithelial tight junctions. Association with PARD3 may prevent the interaction of PARD3 with F11R/JAM1, thereby preventing tight junction assembly. The PARD6-PARD3 complex links GTP-bound Rho small GTPases to atypical protein kinase C proteins. Regulates centrosome organization and function. Essential for the centrosomal recruitment of key proteins that control centrosomal microtubule organization. The polypeptide is Partitioning defective 6 homolog alpha (PARD6A) (Homo sapiens (Human)).